Reading from the N-terminus, the 262-residue chain is Acyl-[acyl-carrier-protein]--UDP-N-acetylglucosamine O-acyltransferase (262 aa).

It belongs to the transferase hexapeptide repeat family. LpxA subfamily. Homotrimer.

It localises to the cytoplasm. The enzyme catalyses a (3R)-hydroxyacyl-[ACP] + UDP-N-acetyl-alpha-D-glucosamine = a UDP-3-O-[(3R)-3-hydroxyacyl]-N-acetyl-alpha-D-glucosamine + holo-[ACP]. Its pathway is glycolipid biosynthesis; lipid IV(A) biosynthesis; lipid IV(A) from (3R)-3-hydroxytetradecanoyl-[acyl-carrier-protein] and UDP-N-acetyl-alpha-D-glucosamine: step 1/6. In terms of biological role, involved in the biosynthesis of lipid A, a phosphorylated glycolipid that anchors the lipopolysaccharide to the outer membrane of the cell. This is Acyl-[acyl-carrier-protein]--UDP-N-acetylglucosamine O-acyltransferase from Vibrio parahaemolyticus serotype O3:K6 (strain RIMD 2210633).